A 182-amino-acid chain; its full sequence is UPF0397 protein YdcD (182 aa).

5 helical membrane-spanning segments follow: residues 8–28 (IVVA…LINI), 42–62 (AVLA…IGFI), 74–94 (APWW…AFGV), 114–134 (IVQF…GDVL), and 146–166 (QGIV…TLLL).

Belongs to the UPF0397 family.

It is found in the cell membrane. This is UPF0397 protein YdcD (ydcD) from Lactococcus lactis subsp. lactis (strain IL1403) (Streptococcus lactis).